Reading from the N-terminus, the 269-residue chain is 5'-nucleotidase SurE (269 aa).

D11, D12, S43, and N101 together coordinate a divalent metal cation.

It belongs to the SurE nucleotidase family. The cofactor is a divalent metal cation.

It localises to the cytoplasm. It carries out the reaction a ribonucleoside 5'-phosphate + H2O = a ribonucleoside + phosphate. Nucleotidase that shows phosphatase activity on nucleoside 5'-monophosphates. This chain is 5'-nucleotidase SurE, found in Prochlorococcus marinus (strain MIT 9301).